The primary structure comprises 211 residues: Intermembrane phospholipid transport system binding protein MlaC (211 aa).

An N-terminal signal peptide occupies residues 1–21 (MFKRLMMVALLVIAPLSAATA).

It belongs to the MlaC/ttg2D family. In terms of assembly, interacts with the MlaA-OmpF outer membrane complex and with the inner membrane ABC transporter complex MlaFEDB, via direct interaction with MlaD.

Its subcellular location is the periplasm. In terms of biological role, involved in a phospholipid transport pathway that maintains lipid asymmetry in the outer membrane by retrograde trafficking of phospholipids from the outer membrane to the inner membrane. May transfer phospholipid across the periplasmic space and deliver it to the MlaFEDB complex at the inner membrane. The chain is Intermembrane phospholipid transport system binding protein MlaC from Escherichia coli (strain K12).